Here is a 400-residue protein sequence, read N- to C-terminus: Golgin-45 (400 aa).

A disordered region spans residues 1 to 36 (MEKMTTLKSFESKGILTSTPIRGAGDGMETEEPPKS). The short motif at 22-26 (RGAGD) is the Tankyrase-binding motif element. S53 is subject to Phosphoserine. A coiled-coil region spans residues 126–263 (LSEVKKVLEK…LSEREQFRQE (138 aa)). At S356 the chain carries Phosphoserine. The segment at 394-400 (QGELLAL) is essential for interaction with GORASP2.

In terms of assembly, interacts with GORASP2. Interacts with the GTP-bound form of RAB2, but not with other Golgi Rab proteins. Identified in a complex with RAB2 and GORASP2. Post-translationally, ADP-ribosylated by tankyrase TNKS and TNKS2. Poly-ADP-ribosylated protein is recognized by RNF146, followed by ubiquitination. In terms of processing, ubiquitinated by RNF146 when poly-ADP-ribosylated, leading to its degradation.

Its subcellular location is the golgi apparatus membrane. Functionally, required for normal Golgi structure and for protein transport from the endoplasmic reticulum (ER) through the Golgi apparatus to the cell surface. The protein is Golgin-45 of Rattus norvegicus (Rat).